The following is a 202-amino-acid chain: High mobility group protein B3 (202 aa).

2 consecutive DNA-binding regions (HMG box) follow at residues 9–79 (PKGK…KDYG) and 93–161 (PKRP…ADYK). Cysteine sulfonic acid (-SO3H); alternate is present on residues cysteine 23 and cysteine 45. Cysteine 23 and cysteine 45 are disulfide-bonded. Residues 71-98 (YDREMKDYGPAKGGKKKKDPNAPKRPPS) form a disordered region. At cysteine 104 the chain carries Cysteine sulfonic acid (-SO3H). Residues 161-202 (KSKGKFDGAKGAATKAARKKVEEEDEEEEEDEEEEDEDDDDE) form a disordered region. Residues 183–202 (EEDEEEEEDEEEEDEDDDDE) show a composition bias toward acidic residues.

It belongs to the HMGB family. Post-translationally, reduction/oxidation of cysteine residues Cys-23, Cys-45 and Cys-104 and a possible intramolecular disulfide bond involving Cys-23 and Cys-45 give rise to different redox forms with specific functional activities in various cellular compartments: 1- fully reduced HMGB3 (HMGB3C23hC45hC104h), 2- disulfide HMGB3 (HMGB3C23-C45C104h) and 3- sulfonyl HMGB3 (HMGB3C23soC45soC104so).

The protein resides in the nucleus. It is found in the chromosome. The protein localises to the cytoplasm. In terms of biological role, multifunctional protein with various roles in different cellular compartments. May act in a redox sensitive manner. Associates with chromatin and binds DNA with a preference for non-canonical DNA structures such as single-stranded DNA. Can bend DNA and enhance DNA flexibility by looping thus providing a mechanism to promote activities on various gene promoters. Binds to the delta-1 crystallin/ASL1 enhancer. Proposed to be involved in the innate immune response to nucleic acids by acting as a cytoplasmic promiscuous immunogenic DNA/RNA sensor. This is High mobility group protein B3 (HMGB3) from Gallus gallus (Chicken).